The sequence spans 255 residues: Hydroxyacylglutathione hydrolase (255 aa).

Zn(2+) is bound by residues histidine 56, histidine 58, aspartate 60, histidine 61, histidine 114, aspartate 133, and histidine 171.

This sequence belongs to the metallo-beta-lactamase superfamily. Glyoxalase II family. Monomer. The cofactor is Zn(2+).

The enzyme catalyses an S-(2-hydroxyacyl)glutathione + H2O = a 2-hydroxy carboxylate + glutathione + H(+). It participates in secondary metabolite metabolism; methylglyoxal degradation; (R)-lactate from methylglyoxal: step 2/2. In terms of biological role, thiolesterase that catalyzes the hydrolysis of S-D-lactoyl-glutathione to form glutathione and D-lactic acid. The protein is Hydroxyacylglutathione hydrolase of Rhodopseudomonas palustris (strain ATCC BAA-98 / CGA009).